The primary structure comprises 470 residues: MKNFLCEDFLLSNETARRLYHEHAFHQPIYDYHCHLNPAEVTQNRQFDNLGQIWLEGDHYKWRGMRSAGIEERLITGDASDYDKYMAWAKTVPQTLGNPLYHWTHLELRRPFGITNTLFSPDTADQIWHQCNELLATPEFTARGIMQQMNVVMAGTTDDPIDSLEHHKAIAEDDTFNVKVLPSWRPDKAFKIELDLFADYMHKLGEVADIDIRRFDDLLSALDKRLAHFDSHGCRAADHGIEIVRYAPIPSEADLDALLARRLSGEVLSELECAQFSTAVQVWLGKRYAQLGWVMQLHIGAQRNNSTRMFQLLGADAGFDSIGDRPFAFELAHLLDEMDQTNELPRTILYCLNPRDNEMMATMIGNFQGGGIAGKVQFGSGWWFNDQKDGMQRQMEQLSQLGLLSQFVGMLTDSRSFLSYTRHEYFRRILCDMVGRWAENGEVPNDLSLLGPMVEDICFGNAKRYFEERA.

Belongs to the metallo-dependent hydrolases superfamily. Uronate isomerase family.

The catalysed reaction is D-glucuronate = D-fructuronate. The enzyme catalyses aldehydo-D-galacturonate = keto-D-tagaturonate. The protein operates within carbohydrate metabolism; pentose and glucuronate interconversion. The chain is Uronate isomerase from Vibrio parahaemolyticus serotype O3:K6 (strain RIMD 2210633).